The chain runs to 436 residues: Probable 4-aminobutyrate aminotransferase (436 aa).

N6-(pyridoxal phosphate)lysine is present on Lys281.

Belongs to the class-III pyridoxal-phosphate-dependent aminotransferase family. The cofactor is pyridoxal 5'-phosphate.

The catalysed reaction is 4-aminobutanoate + 2-oxoglutarate = succinate semialdehyde + L-glutamate. It carries out the reaction (S)-3-amino-2-methylpropanoate + 2-oxoglutarate = 2-methyl-3-oxopropanoate + L-glutamate. The protein operates within amino-acid degradation; 4-aminobutanoate degradation. The protein is Probable 4-aminobutyrate aminotransferase (gabT) of Bacillus subtilis (strain 168).